Consider the following 111-residue polypeptide: Small ribosomal subunit protein uS10 (111 aa).

Belongs to the universal ribosomal protein uS10 family. In terms of assembly, part of the 30S ribosomal subunit.

In terms of biological role, involved in the binding of tRNA to the ribosomes. The chain is Small ribosomal subunit protein uS10 from Ehrlichia ruminantium (strain Welgevonden).